A 201-amino-acid polypeptide reads, in one-letter code: Probable nicotinate-nucleotide adenylyltransferase (201 aa).

Belongs to the NadD family.

The enzyme catalyses nicotinate beta-D-ribonucleotide + ATP + H(+) = deamido-NAD(+) + diphosphate. Its pathway is cofactor biosynthesis; NAD(+) biosynthesis; deamido-NAD(+) from nicotinate D-ribonucleotide: step 1/1. Catalyzes the reversible adenylation of nicotinate mononucleotide (NaMN) to nicotinic acid adenine dinucleotide (NaAD). This chain is Probable nicotinate-nucleotide adenylyltransferase, found in Clostridium botulinum (strain Okra / Type B1).